The primary structure comprises 472 residues: Cell division protein FtsP (472 aa).

The tat-type signal signal peptide spans 1–27 (MSLSRRQFIQASGIALCAGAMPLTARA).

It belongs to the FtsP family. Predicted to be exported by the Tat system. The position of the signal peptide cleavage has not been experimentally proven.

The protein resides in the periplasm. Cell division protein that is required for growth during stress conditions. May be involved in protecting or stabilizing the divisomal assembly under conditions of stress. This chain is Cell division protein FtsP, found in Dickeya dadantii (strain 3937) (Erwinia chrysanthemi (strain 3937)).